We begin with the raw amino-acid sequence, 481 residues long: UDP-N-acetylmuramoyl-L-alanyl-D-glutamate--L-lysine ligase (481 aa).

Serine 42 contacts UDP-N-acetyl-alpha-D-muramoyl-L-alanyl-D-glutamate. 118–124 provides a ligand contact to ATP; sequence GTKGKTT. UDP-N-acetyl-alpha-D-muramoyl-L-alanyl-D-glutamate-binding positions include 160–161, serine 187, and arginine 195; that span reads TT. Lysine 229 is modified (N6-carboxylysine). Positions 404-407 match the L-lysine recognition motif motif; that stretch reads DDPN.

Belongs to the MurCDEF family. MurE subfamily. Post-translationally, carboxylation is probably crucial for Mg(2+) binding and, consequently, for the gamma-phosphate positioning of ATP.

The protein localises to the cytoplasm. The enzyme catalyses UDP-N-acetyl-alpha-D-muramoyl-L-alanyl-D-glutamate + L-lysine + ATP = UDP-N-acetyl-alpha-D-muramoyl-L-alanyl-gamma-D-glutamyl-L-lysine + ADP + phosphate + H(+). Its pathway is cell wall biogenesis; peptidoglycan biosynthesis. In terms of biological role, catalyzes the addition of L-lysine to the nucleotide precursor UDP-N-acetylmuramoyl-L-alanyl-D-glutamate (UMAG) in the biosynthesis of bacterial cell-wall peptidoglycan. This Streptococcus suis (strain 98HAH33) protein is UDP-N-acetylmuramoyl-L-alanyl-D-glutamate--L-lysine ligase.